The chain runs to 280 residues: Virginiamycin B lyase (280 aa).

Histidine 215 provides a ligand contact to substrate. Glutamate 254 is a Mg(2+) binding site. Histidine 256 acts as the Proton acceptor in catalysis. Glutamate 271 provides a ligand contact to Mg(2+).

This sequence belongs to the Vgb family. Monomer. Mg(2+) is required as a cofactor.

Its function is as follows. Inactivates the type B streptogramin antibiotics by linearizing the lactone ring at the ester linkage, generating a free phenylglycine carboxylate and converting the threonyl moiety into 2-amino-butenoic acid. The protein is Virginiamycin B lyase of Mycobacterium sp. (strain JLS).